Consider the following 363-residue polypeptide: Ribonuclease D (363 aa).

Positions 5-168 constitute a 3'-5' exonuclease domain; sequence ITHPSELTDR…AIHDELTRRL (164 aa). The HRDC domain maps to 208–288; it reads EPAAQRRLLR…NTPLPDEEHA (81 aa).

This sequence belongs to the RNase D family. The cofactor is a divalent metal cation.

Its subcellular location is the cytoplasm. The enzyme catalyses Exonucleolytic cleavage that removes extra residues from the 3'-terminus of tRNA to produce 5'-mononucleotides.. Exonuclease involved in the 3' processing of various precursor tRNAs. Initiates hydrolysis at the 3'-terminus of an RNA molecule and releases 5'-mononucleotides. The polypeptide is Ribonuclease D (Xanthomonas oryzae pv. oryzae (strain KACC10331 / KXO85)).